Consider the following 105-residue polypeptide: Small ribosomal subunit protein uS10 (105 aa).

This sequence belongs to the universal ribosomal protein uS10 family. Part of the 30S ribosomal subunit.

Functionally, involved in the binding of tRNA to the ribosomes. This Picosynechococcus sp. (strain ATCC 27264 / PCC 7002 / PR-6) (Agmenellum quadruplicatum) protein is Small ribosomal subunit protein uS10.